The primary structure comprises 275 residues: Ribosomal RNA small subunit methyltransferase A (275 aa).

Residues N19, L21, G46, E71, D94, and N117 each contribute to the S-adenosyl-L-methionine site.

It belongs to the class I-like SAM-binding methyltransferase superfamily. rRNA adenine N(6)-methyltransferase family. RsmA subfamily.

The protein localises to the cytoplasm. It catalyses the reaction adenosine(1518)/adenosine(1519) in 16S rRNA + 4 S-adenosyl-L-methionine = N(6)-dimethyladenosine(1518)/N(6)-dimethyladenosine(1519) in 16S rRNA + 4 S-adenosyl-L-homocysteine + 4 H(+). Its function is as follows. Specifically dimethylates two adjacent adenosines (A1518 and A1519) in the loop of a conserved hairpin near the 3'-end of 16S rRNA in the 30S particle. May play a critical role in biogenesis of 30S subunits. This is Ribosomal RNA small subunit methyltransferase A from Burkholderia multivorans (strain ATCC 17616 / 249).